Reading from the N-terminus, the 578-residue chain is LMVVTSNADRICTGITSSNSPHVVKTATQGEVNVTGVIPLTTTPTKSHFANLKGTKTRGKLCPKCLNCTDLDVAFGRPKCMGTIPSAKASILHEVKPVTSGCFPIMHDRTKIRQLPNLLRGYENIRLSTHNVINAETAPGGPYIVGTSGSCPNVTNGNGFFATMAWAVPKNNNNKTATNPLTVEVPFICTEGEDQITVWGFHSDNEIQMVKLYGDSKPQKFTSSANGVTTHYVSQIGGFPKQAEDGGLPQSGRIVVDYMVQKSGKTGTITYQRGILLPQKVWCASGRSKVIKGSLPLIGEADCLHEKYGGLNKSKPYYTGEHAKAIGNCPIWVKTPLKLANGTKYRPPAKLLKERGFFGAIAGFLEGGWEGMIAGWHGYTSHGAHGVAVAADLKSTQEAINKITKNLNSLSELEVKNLQRLSGAMDELHNEILELDEKVDNLRADTISSQIELAVLLSNEGIINSEDEHLLALERKLKKMLGPSAVDIGNGCFETKHKCNQTCLDRIAAGTFNAGEFSLPTFDSLNITAASLNDDGLDNHTILLYYSTAASSLAVTLMIAIFIVYMVSRDNVSCSICL.

Residues 1-546 (LMVVTSNADR…LDNHTILLYY (546 aa)) are Extracellular-facing. Cystine bridges form between Cys-12-Cys-492, Cys-68-Cys-80, Cys-102-Cys-151, and Cys-499-Cys-503. Asn-33 and Asn-67 each carry an N-linked (GlcNAc...) asparagine; by host glycan. 7 N-linked (GlcNAc...) asparagine; by host glycosylation sites follow: Asn-153, Asn-174, Asn-312, Asn-341, Asn-500, Asn-526, and Asn-539. The chain crosses the membrane as a helical span at residues 547–567 (STAASSLAVTLMIAIFIVYMV). Residues 568–578 (SRDNVSCSICL) lie on the Cytoplasmic side of the membrane. 2 S-palmitoyl cysteine; by host lipidation sites follow: Cys-574 and Cys-577.

Belongs to the influenza viruses hemagglutinin family. In terms of assembly, homotrimer of disulfide-linked HA1-HA2. Post-translationally, palmitoylated. In terms of processing, in natural infection, inactive HA is matured into HA1 and HA2 outside the cell by one or more trypsin-like, arginine-specific endoprotease secreted by the bronchial epithelial cells. One identified protease that may be involved in this process is secreted in lungs by club cells.

It localises to the virion membrane. The protein resides in the host apical cell membrane. Its function is as follows. Binds to sialic acid-containing receptors on the cell surface, bringing about the attachment of the virus particle to the cell. Plays a major role in the determination of host range restriction and virulence. Class I viral fusion protein. Responsible for penetration of the virus into the cell cytoplasm by mediating the fusion of the membrane of the endocytosed virus particle with the endosomal membrane. Low pH in endosomes induce an irreversible conformational change in HA2, releasing the fusion hydrophobic peptide. Several trimers are required to form a competent fusion pore. The chain is Hemagglutinin from Homo sapiens (Human).